The chain runs to 210 residues: Cdc42 effector protein 2 (210 aa).

The residue at position 2 (S2) is an N-acetylserine. The 15-residue stretch at 30–44 (ISPPLGDFRHTIHIG) folds into the CRIB domain. Phosphoserine occurs at positions 31, 101, and 141. The interval 122 to 171 (PTAQAPPKPPRLHLETPQPSPQEGGSVDIWRIPETGSPNSGLTPESGAEE) is disordered.

Belongs to the BORG/CEP family. Interacts with RHOQ and CDC42 in a GTP-dependent manner, and with SEPT7. In terms of tissue distribution, highly expressed in the heart. Weakly expressed in the pancreas and liver.

It is found in the endomembrane system. The protein localises to the cytoplasm. The protein resides in the cytoskeleton. Probably involved in the organization of the actin cytoskeleton. May act downstream of CDC42 to induce actin filament assembly leading to cell shape changes. Induces pseudopodia formation in fibroblasts in a CDC42-dependent manner. This chain is Cdc42 effector protein 2 (CDC42EP2), found in Homo sapiens (Human).